The primary structure comprises 341 residues: GDP-mannose transporter GONST5 (341 aa).

The next 8 helical transmembrane spans lie at Leu-17–Phe-37, Phe-44–Ile-64, Phe-89–Phe-109, Leu-141–Phe-161, Ile-192–Leu-212, Ile-233–Ile-253, Thr-260–Phe-280, and Ile-284–Tyr-304. The region spanning Asn-33–Ser-152 is the EamA domain.

It belongs to the TPT transporter family. TPT (TC 2.A.7.9) subfamily. As to expression, expressed in rosette leaves, flowers and siliques.

It localises to the golgi apparatus membrane. Its function is as follows. GDP-mannose transporter that may be involved in the import of GDP-mannose from the cytoplasm into the Golgi lumen. The protein is GDP-mannose transporter GONST5 (GONST5) of Arabidopsis thaliana (Mouse-ear cress).